The following is a 189-amino-acid chain: Putative manganese efflux pump MntP (189 aa).

The next 6 helical transmembrane spans lie at 3–23 (IVST…AAVS), 41–61 (MIFG…GRVA), 62–82 (ADYV…FLGI), 103–123 (SFIL…SVGV), 132–152 (IVPV…AGVM), and 167–187 (IIGG…HLYG).

Belongs to the MntP (TC 9.B.29) family.

It is found in the cell inner membrane. Its function is as follows. Probably functions as a manganese efflux pump. This Methylobacillus flagellatus (strain ATCC 51484 / DSM 6875 / VKM B-1610 / KT) protein is Putative manganese efflux pump MntP.